Here is a 399-residue protein sequence, read N- to C-terminus: Lipid droplet-regulating VLDL assembly factor AUP1 (399 aa).

At 1-21 the chain is on the cytoplasmic side; the sequence is MEQPSLESMLELQRFPRNPFS. The stretch at 22–42 is an intramembrane region; that stretch reads LVLLLLYFPFGLCLFLIRLFI. Topologically, residues 43 to 399 are cytoplasmic; the sequence is GAHVFLVSCV…GEEEEEGARG (357 aa). The 43-residue stretch at 284–326 folds into the CUE domain; the sequence is THIQMAQHVKEVLPQVPLSAIHRDLGHTGCVDTTITNFLEGRV. Residues 332 to 364 form a disordered region; sequence EEETTGAAEGTSKSRVSRPLPQGFAKKPEDRHL.

Belongs to the AUP1 family.

It is found in the endoplasmic reticulum membrane. The protein localises to the lipid droplet. Its function is as follows. Plays a role in the translocation of terminally misfolded proteins from the endoplasmic reticulum lumen to the cytoplasm and their degradation by the proteasome. Plays a role in lipid droplet formation. Induces lipid droplet clustering. The polypeptide is Lipid droplet-regulating VLDL assembly factor AUP1 (Xenopus laevis (African clawed frog)).